The chain runs to 434 residues: MIEKTYCQDIKPELDGKRVKLAGWVYSNMRVGKKIFLWIRDSTGIIQTVIAKNVVGEDVFETAKKLGRESSVIVEGIVKADERAPGGAEVHVEKLKVIQAVSEFPIPENPEQASPELLLDYRHLHIRSPKVSAIMRVKETLIMAAREWLLREGWHEVFPPILVTGAVEGGATLFKLKYFDKVAYLSQSAQLYLEAAIFGLEKVWSLTPSFRAEKSRTRRHLTEFWHLELEAAWMDLWDIMKVEEELVSYMVQRTLELRKKEIEMFRDDLTTLKNTEPPFPRISYDEAIEILQSKGVKIEWGDDMGADEERVLTQEFDRPFFVYGYPKHIKAFYMKEDPNDPRKVLAADMLAPEGYGEIIGGSEREDNYDKLVQRIKEEGMDPKDYEWYLDLRKYGSVPHSGFGLGVERLVAWVLKLDHIRWATLFPRTPARIYP.

Belongs to the class-II aminoacyl-tRNA synthetase family.

It localises to the cytoplasm. The enzyme catalyses tRNA(Asn) + L-asparagine + ATP = L-asparaginyl-tRNA(Asn) + AMP + diphosphate + H(+). In Pyrococcus abyssi (strain GE5 / Orsay), this protein is Asparagine--tRNA ligase.